A 679-amino-acid chain; its full sequence is Mitotic interactor and substrate of PLK1 (679 aa).

Ser78 is subject to Phosphoserine; by CDK1; in vitro. Disordered regions lie at residues 151–182 (AVRK…TPLE) and 206–245 (ANKG…GHVV). The segment covering 153-163 (RKSSTVATLQG) has biased composition (polar residues). Ser156 carries the phosphoserine modification. Phosphothreonine; by CDK1; in vitro is present on residues Thr164 and Thr172. Phosphothreonine is present on Thr179. Ser214 bears the Phosphoserine; by CDK1; in vitro mark. Residue Thr219 is modified to Phosphothreonine. Thr224 carries the post-translational modification Phosphothreonine; by CDK1; in vitro. Ser284 is subject to Phosphoserine; by CDK1; in vitro. Position 287 is a phosphothreonine; by CDK1; in vitro (Thr287). Ser348 bears the Phosphoserine mark. Positions 360-371 (QREEDHRREGLH) are enriched in basic and acidic residues. Residues 360–419 (QREEDHRREGLHVGRASTPDWVSEGPQPGLRRALSSDSILSPAPDARAADPAPEVRKVNR) form a disordered region. Thr377 bears the Phosphothreonine; by CDK1; in vitro mark. A Phosphoserine; by CDK1; in vitro modification is found at Ser382. 3 positions are modified to phosphoserine; by PLK1; in vitro: Ser394, Ser395, and Ser397. Residue Ser400 is modified to Phosphoserine. Low complexity predominate over residues 401–411 (PAPDARAADPA). Position 430 is a phosphoserine (Ser430). Residues 447–494 (PSSLSTAEAKAATSPKATMSPRHLSESSGKPLSTKQEASKPPRGCPQA) form a disordered region. Ser471 is subject to Phosphoserine; by PLK1; in vitro. Polar residues predominate over residues 472–482 (ESSGKPLSTKQ). Phosphoserine is present on residues Ser541 and Ser543. Residues 545–569 (DLLERERESVLRREQEVAEERRNAL) are a coiled coil. Over residues 557–567 (REQEVAEERRN) the composition is skewed to basic and acidic residues. Disordered stretches follow at residues 557 to 598 (REQE…ITGS) and 622 to 643 (DPVD…GINP). The residue at position 575 (Ser575) is a Phosphoserine; by CDK1; in vitro. A Phosphothreonine modification is found at Thr577. Ser582 and Ser586 each carry phosphoserine; by PLK1; in vitro. Over residues 583-593 (DQNSRSSSQAS) the composition is skewed to low complexity. Ser675 carries the phosphoserine modification.

The protein belongs to the MISP family. Associates with F-actin. Interacts with DCTN1; this interaction regulates DCTN1 distribution at the cell cortex. Interacts with PTK2/FAK and MAPRE1. Phosphorylated by CDK1 and PLK1. CDK1 is the priming kinase for PLK1 phosphorylation. Phosphorylation by PLK1 is required for proper spindle orientation at metaphase.

The protein resides in the cell junction. Its subcellular location is the focal adhesion. The protein localises to the cytoplasm. It is found in the cytoskeleton. It localises to the cell cortex. Its function is as follows. Plays a role in mitotic spindle orientation and mitotic progression. Regulates the distribution of dynactin at the cell cortex in a PLK1-dependent manner, thus stabilizing cortical and astral microtubule attachments required for proper mitotic spindle positioning. May link microtubules to the actin cytospkeleton and focal adhesions. May be required for directed cell migration and centrosome orientation. May also be necessary for proper stacking of the Golgi apparatus. The sequence is that of Mitotic interactor and substrate of PLK1 from Homo sapiens (Human).